The following is a 426-amino-acid chain: Glutamate-1-semialdehyde 2,1-aminomutase (426 aa).

Position 265 is an N6-(pyridoxal phosphate)lysine (Lys265).

It belongs to the class-III pyridoxal-phosphate-dependent aminotransferase family. HemL subfamily. In terms of assembly, homodimer. Pyridoxal 5'-phosphate is required as a cofactor.

Its subcellular location is the cytoplasm. It catalyses the reaction (S)-4-amino-5-oxopentanoate = 5-aminolevulinate. The protein operates within porphyrin-containing compound metabolism; protoporphyrin-IX biosynthesis; 5-aminolevulinate from L-glutamyl-tRNA(Glu): step 2/2. This chain is Glutamate-1-semialdehyde 2,1-aminomutase, found in Alteromonas mediterranea (strain DSM 17117 / CIP 110805 / LMG 28347 / Deep ecotype).